The primary structure comprises 216 residues: Imidazole glycerol phosphate synthase subunit HisH (216 aa).

The region spanning 5–213 is the Glutamine amidotransferase type-1 domain; it reads RLAVIDYDAG…VEFVARRLPA (209 aa). Cys-83 acts as the Nucleophile in catalysis. Residues His-188 and Glu-190 contribute to the active site.

As to quaternary structure, heterodimer of HisH and HisF.

Its subcellular location is the cytoplasm. The enzyme catalyses 5-[(5-phospho-1-deoxy-D-ribulos-1-ylimino)methylamino]-1-(5-phospho-beta-D-ribosyl)imidazole-4-carboxamide + L-glutamine = D-erythro-1-(imidazol-4-yl)glycerol 3-phosphate + 5-amino-1-(5-phospho-beta-D-ribosyl)imidazole-4-carboxamide + L-glutamate + H(+). It carries out the reaction L-glutamine + H2O = L-glutamate + NH4(+). It participates in amino-acid biosynthesis; L-histidine biosynthesis; L-histidine from 5-phospho-alpha-D-ribose 1-diphosphate: step 5/9. IGPS catalyzes the conversion of PRFAR and glutamine to IGP, AICAR and glutamate. The HisH subunit catalyzes the hydrolysis of glutamine to glutamate and ammonia as part of the synthesis of IGP and AICAR. The resulting ammonia molecule is channeled to the active site of HisF. This Synechococcus sp. (strain JA-3-3Ab) (Cyanobacteria bacterium Yellowstone A-Prime) protein is Imidazole glycerol phosphate synthase subunit HisH.